The chain runs to 261 residues: 5'-nucleotidase SurE (261 aa).

Residues Asp-8, Asp-9, Ser-43, and Asn-96 each contribute to the a divalent metal cation site.

The protein belongs to the SurE nucleotidase family. A divalent metal cation serves as cofactor.

Its subcellular location is the cytoplasm. The catalysed reaction is a ribonucleoside 5'-phosphate + H2O = a ribonucleoside + phosphate. In terms of biological role, nucleotidase that shows phosphatase activity on nucleoside 5'-monophosphates. The polypeptide is 5'-nucleotidase SurE (Cereibacter sphaeroides (strain ATCC 17025 / ATH 2.4.3) (Rhodobacter sphaeroides)).